Here is an 89-residue protein sequence, read N- to C-terminus: Elongation factor 1-beta (89 aa).

Belongs to the EF-1-beta/EF-1-delta family.

In terms of biological role, promotes the exchange of GDP for GTP in EF-1-alpha/GDP, thus allowing the regeneration of EF-1-alpha/GTP that could then be used to form the ternary complex EF-1-alpha/GTP/AAtRNA. This is Elongation factor 1-beta from Methanococcus maripaludis (strain C7 / ATCC BAA-1331).